Here is a 253-residue protein sequence, read N- to C-terminus: Coenzyme F420:L-glutamate ligase (253 aa).

Residues 9–12 (LPEI), 38–39 (ST), and Lys43 each bind GTP. Asp113 lines the a divalent metal cation pocket. Residue Asn116 participates in GTP binding. Positions 148, 149, and 206 each coordinate a divalent metal cation. 204–211 (AGEGDDGT) is a binding site for GTP.

This sequence belongs to the CofE family. In terms of assembly, homodimer. Requires Mg(2+) as cofactor. It depends on Mn(2+) as a cofactor. K(+) serves as cofactor.

It catalyses the reaction oxidized coenzyme F420-0 + GTP + L-glutamate = oxidized coenzyme F420-1 + GDP + phosphate + H(+). It carries out the reaction oxidized coenzyme F420-1 + GTP + L-glutamate = oxidized coenzyme F420-2 + GDP + phosphate + H(+). The protein operates within cofactor biosynthesis; coenzyme F420 biosynthesis. Functionally, catalyzes the GTP-dependent successive addition of two or more gamma-linked L-glutamates to the L-lactyl phosphodiester of 7,8-didemethyl-8-hydroxy-5-deazariboflavin (F420-0) to form coenzyme F420-0-glutamyl-glutamate (F420-2) or polyglutamated F420 derivatives. The polypeptide is Coenzyme F420:L-glutamate ligase (Natronomonas pharaonis (strain ATCC 35678 / DSM 2160 / CIP 103997 / JCM 8858 / NBRC 14720 / NCIMB 2260 / Gabara) (Halobacterium pharaonis)).